We begin with the raw amino-acid sequence, 293 residues long: Probable xyloglucan endotransglucosylase/hydrolase protein B (293 aa).

The N-terminal stretch at Met1–Cys21 is a signal peptide. In terms of domain architecture, GH16 spans Ala23–Tyr220. Catalysis depends on Glu106, which acts as the Nucleophile. The Proton donor role is filled by Glu110. Position 110 (Glu110) interacts with xyloglucan. A glycan (N-linked (GlcNAc...) asparagine) is linked at Asn114. Residues Gln123–Asn125, Asp133–Glu135, Asp199–Trp200, and Gly204 each bind xyloglucan. Disulfide bonds link Cys228–Cys237 and Cys274–Cys287. Arg279 serves as a coordination point for xyloglucan.

It belongs to the glycosyl hydrolase 16 family. XTH group 1 subfamily. Post-translationally, contains at least one intrachain disulfide bond essential for its enzymatic activity. As to expression, predominantly expressed in the phloem fibers of growing internodes. Weakly or not expressed in the xylem. In the internode, it is expressed closer to the bottom of the internode compared to XTHA.

It localises to the secreted. Its subcellular location is the cell wall. It is found in the extracellular space. The protein resides in the apoplast. The catalysed reaction is breaks a beta-(1-&gt;4) bond in the backbone of a xyloglucan and transfers the xyloglucanyl segment on to O-4 of the non-reducing terminal glucose residue of an acceptor, which can be a xyloglucan or an oligosaccharide of xyloglucan.. Catalyzes xyloglucan endohydrolysis (XEH) and/or endotransglycosylation (XET). Cleaves and religates xyloglucan polymers, an essential constituent of the primary cell wall, and thereby participates in cell wall construction of growing tissues. This chain is Probable xyloglucan endotransglucosylase/hydrolase protein B (XTHB), found in Phaseolus angularis (Azuki bean).